The sequence spans 1406 residues: DNA-directed RNA polymerase subunit beta' (1406 aa).

4 residues coordinate Zn(2+): cysteine 70, cysteine 72, cysteine 85, and cysteine 88. Mg(2+) contacts are provided by aspartate 460, aspartate 462, and aspartate 464. Residues cysteine 814, cysteine 888, cysteine 895, and cysteine 898 each contribute to the Zn(2+) site.

Belongs to the RNA polymerase beta' chain family. In terms of assembly, the RNAP catalytic core consists of 2 alpha, 1 beta, 1 beta' and 1 omega subunit. When a sigma factor is associated with the core the holoenzyme is formed, which can initiate transcription. Mg(2+) is required as a cofactor. Requires Zn(2+) as cofactor.

It carries out the reaction RNA(n) + a ribonucleoside 5'-triphosphate = RNA(n+1) + diphosphate. Functionally, DNA-dependent RNA polymerase catalyzes the transcription of DNA into RNA using the four ribonucleoside triphosphates as substrates. This is DNA-directed RNA polymerase subunit beta' from Yersinia enterocolitica serotype O:8 / biotype 1B (strain NCTC 13174 / 8081).